The sequence spans 85 residues: uncharacterized protein (85 aa).

Positions Asp-64–His-76 are enriched in basic and acidic residues. The interval Asp-64–Ser-85 is disordered.

This is an uncharacterized protein from Mycobacterium bovis (strain ATCC BAA-935 / AF2122/97).